The sequence spans 729 residues: Fatty acid oxidation complex subunit alpha (729 aa).

The interval 1–189 is enoyl-CoA hydratase/isomerase; it reads MLYKGDTLYL…KIGLVDGVVK (189 aa). Asp296 contributes to the substrate binding site. Residues 311-729 form a 3-hydroxyacyl-CoA dehydrogenase region; it reads ETPKQAAVLG…ARPVGDLKTA (419 aa). Residues Met324, Asp343, 400–402, Lys407, and Ser429 contribute to the NAD(+) site; that span reads VVE. The For 3-hydroxyacyl-CoA dehydrogenase activity role is filled by His450. Residue Asn453 coordinates NAD(+). 2 residues coordinate substrate: Asn500 and Tyr660. Residues 708 to 729 are disordered; that stretch reads RHNEPYYPPVEPARPVGDLKTA.

In the N-terminal section; belongs to the enoyl-CoA hydratase/isomerase family. It in the C-terminal section; belongs to the 3-hydroxyacyl-CoA dehydrogenase family. As to quaternary structure, heterotetramer of two alpha chains (FadB) and two beta chains (FadA).

The catalysed reaction is a (3S)-3-hydroxyacyl-CoA + NAD(+) = a 3-oxoacyl-CoA + NADH + H(+). It carries out the reaction a (3S)-3-hydroxyacyl-CoA = a (2E)-enoyl-CoA + H2O. It catalyses the reaction a 4-saturated-(3S)-3-hydroxyacyl-CoA = a (3E)-enoyl-CoA + H2O. The enzyme catalyses (3S)-3-hydroxybutanoyl-CoA = (3R)-3-hydroxybutanoyl-CoA. The catalysed reaction is a (3Z)-enoyl-CoA = a 4-saturated (2E)-enoyl-CoA. It carries out the reaction a (3E)-enoyl-CoA = a 4-saturated (2E)-enoyl-CoA. Its pathway is lipid metabolism; fatty acid beta-oxidation. Functionally, involved in the aerobic and anaerobic degradation of long-chain fatty acids via beta-oxidation cycle. Catalyzes the formation of 3-oxoacyl-CoA from enoyl-CoA via L-3-hydroxyacyl-CoA. It can also use D-3-hydroxyacyl-CoA and cis-3-enoyl-CoA as substrate. This is Fatty acid oxidation complex subunit alpha from Escherichia coli O6:H1 (strain CFT073 / ATCC 700928 / UPEC).